Reading from the N-terminus, the 270-residue chain is Protein MGF 110-1L (270 aa).

Residues 1-26 form the signal peptide; that stretch reads MLGLQIFTLLSIPTLLYTYEIEPLER. The Extracellular portion of the chain corresponds to 27-117; the sequence is TSTPPEKEFG…HERHEADIRK (91 aa). The stretch at 27 to 146 is one A repeat; sequence TSTPPEKEFG…YIRKRSLQTV (120 aa). N-linked (GlcNAc...) asparagine; by host glycosylation is present at Asn75. A helical transmembrane segment spans residues 118–138; the sequence is WQKLLTYGFYLAGCILAVNYI. Residues 139 to 145 are Cytoplasmic-facing; that stretch reads RKRSLQT. The chain crosses the membrane as a helical span at residues 146–166; that stretch reads VMYLLVFLVISFLLSQLMLYG. One copy of the B repeat lies at 147–270; it reads MYLLVFLVIS…DNLMKKQDIM (124 aa). Residues 167 to 270 are Extracellular-facing; that stretch reads ELEDKKHKIG…DNLMKKQDIM (104 aa).

This sequence belongs to the asfivirus MGF 110 family.

It is found in the membrane. Plays a role in virus cell tropism, and may be required for efficient virus replication in macrophages. The polypeptide is Protein MGF 110-1L (African swine fever virus (isolate Pig/Portugal/OURT88/1988) (ASFV)).